We begin with the raw amino-acid sequence, 1627 residues long: Type III effector DspE (1627 aa).

Composition is skewed to polar residues over residues 22–44 (AKTS…SLIQ) and 59–74 (GNGS…STTL). 2 disordered regions span residues 22 to 102 (AKTS…GPIQ) and 436 to 464 (QTQA…TPGW). 3 short sequence motifs (wxxxE) span residues 464–468 (WNLSD), 514–520 (WEASSVE), and 660–667 (WQNAANHD).

This sequence belongs to the AvrE family.

It localises to the secreted. The protein localises to the host cell. Major virulence factor that may function as a water- and solute-permeable channel dedicated to creating osmotic/water potential perturbation and a water- and nutrient-rich apoplast in which bacteria multiply within the infected plant tissues. Functionally, required for plant cell death in N.benthamiana leaves and leaf cell death in S.tuberosum. Essential for pathogenicity. Does not suppress callose formation. In Pectobacterium carotovorum (Erwinia carotovora), this protein is Type III effector DspE.